The primary structure comprises 1365 residues: Histone-lysine N-methyltransferase NSD2 (1365 aa).

2 positions are modified to phosphothreonine: Thr-110 and Thr-114. Position 121 is a phosphoserine (Ser-121). The interval 149 to 170 is disordered; that stretch reads ADVSQSEENGQKPENKARRNRK. At Ser-172 the chain carries Phosphoserine. One can recognise a PWWP 1 domain in the interval 222–286; the sequence is VGDLVWSKVS…FEKSLVAFEG (65 aa). Ser-376 carries the phosphoserine modification. Disordered stretches follow at residues 376–455 and 516–658; these read SSGV…RKGD and EDSG…SKKS. Thr-422 is modified (phosphothreonine). A DNA-binding region (HMG box) is located at residues 453-521; sequence KGDAASQFLV…VQAEEDSGNV (69 aa). Thr-544 bears the Phosphothreonine mark. Residues 552–567 are compositionally biased toward basic and acidic residues; sequence DKHSLRKRDTITDKTA. A compositionally biased stretch (polar residues) spans 580-590; it reads SLKSQAATKNL. The span at 606 to 622 shows a compositional bias: low complexity; sequence AASSALGFSKSSSPSAS. Ser-614 bears the Phosphoserine mark. Positions 632-648 are enriched in acidic residues; that stretch reads PGDEPSESPYESADETQ. 3 consecutive PHD-type zinc fingers follow at residues 667 to 713, 714 to 770, and 831 to 875; these read EYVC…CASG, IHSC…CHAS, and VSWC…CRAG. The PWWP 2 domain maps to 880-942; it reads FQDIIWVKLG…QARVFPYMEG (63 aa). One can recognise an AWS domain in the interval 1011 to 1061; sequence SEIPKCNCKPTDENPCGFDSECLNRMLMFECHPQVCPAGEFCQNQCFTKRQ. Zn(2+) contacts are provided by Cys-1016, Cys-1018, Cys-1026, Cys-1032, Cys-1041, Cys-1046, and Cys-1052. One can recognise an SET domain in the interval 1063-1180; it reads PETKIIKTDG…AGTELTFNYN (118 aa). Residues Trp-1075, 1115–1118, and 1141–1142 each bind S-adenosyl-L-methionine; these read THFY and NH. Cys-1144 serves as a coordination point for Zn(2+). Asn-1186 contacts S-adenosyl-L-methionine. Residues 1187–1203 form the Post-SET domain; the sequence is EKTVCRCGASNCSGFLG. Cys-1191 serves as a coordination point for Zn(2+). S-adenosyl-L-methionine is bound at residue Arg-1192. 2 residues coordinate Zn(2+): Cys-1193 and Cys-1198. The tract at residues 1207-1232 is disordered; sequence KTSTTLSSEEKGKKTKKKTRRRRAKG. Basic residues predominate over residues 1219 to 1230; it reads KKTKKKTRRRRA. The PHD-type 4; atypical zinc finger occupies 1239–1286; it reads EDECFRCGDGGQLVLCDRKFCTKAYHLSCLGLGKRPFGKWECPWHHCD. A disordered region spans residues 1333-1365; the sequence is VRSTKTEKPPPEPGKPKGKRRRRRGWRRVTEGK. Positions 1348–1359 are enriched in basic residues; the sequence is PKGKRRRRRGWR.

It belongs to the class V-like SAM-binding methyltransferase superfamily. Histone-lysine methyltransferase family. SET2 subfamily. In terms of assembly, interacts with HDAC1. Interacts (via PHD-type zinc fingers 1, 2 and 3) with SALL1. Interacts (via PHD-type 1, 2 and 3) with SALL4. Interacts with NANOG. Interacts with OGT. Interacts (via HMG box) with NKX2-5. In terms of tissue distribution, widely expressed. Predominantly expressed in thymus and testis.

The protein localises to the nucleus. The protein resides in the chromosome. Its subcellular location is the cytoplasm. It is found in the nucleolus. It catalyses the reaction L-lysyl(36)-[histone H3] + S-adenosyl-L-methionine = N(6)-methyl-L-lysyl(36)-[histone H3] + S-adenosyl-L-homocysteine + H(+). The catalysed reaction is L-lysyl(36)-[histone H3] + 2 S-adenosyl-L-methionine = N(6),N(6)-dimethyl-L-lysyl(36)-[histone H3] + 2 S-adenosyl-L-homocysteine + 2 H(+). Its function is as follows. Histone methyltransferase which specifically dimethylates nucleosomal histone H3 at 'Lys-36' (H3K36me2). Also monomethylates nucleosomal histone H3 at 'Lys-36' (H3K36me) in vitro. Does not trimethylate nucleosomal histone H3 at 'Lys-36' (H3K36me3). However, specifically trimethylates histone H3 at 'Lys-36' (H3K36me3) at euchromatic regions in embryonic stem (ES) cells. By methylating histone H3 at 'Lys-36', involved in the regulation of gene transcription during various biological processes. In ES cells, associates with developmental transcription factors such as SALL1 and represses inappropriate gene transcription mediated by histone deacetylation. During heart development, associates with transcription factor NKX2-5 to repress transcription of NKX2-5 target genes. Plays an essential role in adipogenesis, by regulating expression of genes involved in pre-adipocyte differentiation. During T-cell receptor (TCR) and CD28-mediated T-cell activation, promotes the transcription of transcription factor BCL6 which is required for follicular helper T (Tfh) cell differentiation. During B-cell development, required for the generation of the B1 lineage. During B2 cell activation, may contribute to the control of isotype class switch recombination (CRS), splenic germinal center formation, and the humoral immune response. Plays a role in class switch recombination of the immunoglobulin heavy chain (IgH) locus during B-cell activation. By regulating the methylation of histone H3 at 'Lys-36' and histone H4 at 'Lys-20' at the IgH locus, involved in TP53BP1 recruitment to the IgH switch region and promotes the transcription of IgA. Functionally, histone methyltransferase which specifically dimethylates nucleosomal histone H3 at 'Lys-36' (H3K36me2). Histone methyltransferase which specifically dimethylates nucleosomal histone H3 at 'Lys-36' (H3K36me2). Methylation of histone H3 at 'Lys-27' is controversial. Mono-, di- or tri-methylates histone H3 at 'Lys-27' (H3K27me, H3K27me2 and H3K27me3). Does not methylate histone H3 at 'Lys-27'. May act as a transcription regulator that binds DNA and suppresses IL5 transcription through HDAC recruitment. This Homo sapiens (Human) protein is Histone-lysine N-methyltransferase NSD2.